Here is a 314-residue protein sequence, read N- to C-terminus: Coproporphyrin III ferrochelatase (314 aa).

Histidine 186 and glutamate 268 together coordinate Fe(2+).

Belongs to the ferrochelatase family.

It localises to the cytoplasm. It carries out the reaction Fe-coproporphyrin III + 2 H(+) = coproporphyrin III + Fe(2+). Its pathway is porphyrin-containing compound metabolism; protoheme biosynthesis. Its function is as follows. Involved in coproporphyrin-dependent heme b biosynthesis. Catalyzes the insertion of ferrous iron into coproporphyrin III to form Fe-coproporphyrin III. This Lactococcus lactis subsp. lactis (strain IL1403) (Streptococcus lactis) protein is Coproporphyrin III ferrochelatase.